We begin with the raw amino-acid sequence, 793 residues long: MSLSAAARELSESDFQDIGPAPKPPPVAYNQTKPLVNYMSQMDLGAKSGGKMRAVQRKKSGWVSYKDDGLLSFLWQKRYMVLNDNYLSLYKGDSGREDAVVQIPLTSIVSVSRNQLKQNCFEVVRSSDRSGAPAAGAGGDSSKKSVFIATKTELDLHTWLDSIFSKCPLLSGVSSPTNFTHKVHVGFDPETGSFVGMPFNWEKLLKHSRITGEDWNNNSAAVIQVLQFYQEYNNGTATPTAQAAAQAAGAPGRPPMLTLSSNSSQASMQQIASTPPYSGGEMIPQRKAPTPPKPVVTSGSAIPSAKGGPNVGVTTSPSVHHQNTQHGKQQSPTQSGPPKSLPPLHRDEEGPTAPLGNSVSSVATKESPTERLLNNLSETSLMQKQLPAKPVAPPSSVGPVAPPLRLQPQRVAPGRPAQPGPHAPDTRPGGPNAMKQQHGPPAAASGQLGPDSKKPEGAPGHPTAVAKKKKAGRPTMSNAEIMTRLAAVTFNTDPSPFFQMIEKAGQGASGSVYLAQRLKIPPYDENSGVSQHELNDNIGDKVAIKQMILSKQPRKELIVNEILVMKDSQHKNIVNFLEAYLKTEDDLWVVMEYMEGGSLTDVIENSIGSDASESPMTEPQIAYIVRETCQGLKFLHDKHIIHRDIKSDNVLLDTHGRVKITDFGFCAKLTDKRSKRATMVGTPYWMAPEVVKQREYDEKVDVWSLGIMTIEMLEGEPPYLNEEPLKALYLIATNGTPKLKHPELLSLEIKRFLSVCLCVDVRYRASTEELLHHSFFETSCEPEELANLLKWKK.

Residues 8–27 (RELSESDFQDIGPAPKPPPV) are disordered. Residues 56–168 (QRKKSGWVSY…WLDSIFSKCP (113 aa)) enclose the PH domain. The CRIB domain occupies 173-186 (VSSPTNFTHKVHVG). Disordered stretches follow at residues 243–369 (AAAQ…ESPT) and 383–476 (QKQL…RPTM). Polar residues-rich tracts occupy residues 258–276 (TLSS…STPP), 312–337 (GVTT…QSGP), and 355–369 (LGNS…ESPT). Positions 498-776 (FQMIEKAGQG…TEELLHHSFF (279 aa)) constitute a Protein kinase domain. ATP-binding positions include 504–512 (AGQGASGSV) and Lys-545. The active-site Proton acceptor is Asp-644.

It belongs to the protein kinase superfamily. STE Ser/Thr protein kinase family. STE20 subfamily.

The catalysed reaction is L-seryl-[protein] + ATP = O-phospho-L-seryl-[protein] + ADP + H(+). The enzyme catalyses L-threonyl-[protein] + ATP = O-phospho-L-threonyl-[protein] + ADP + H(+). Its function is as follows. Required for hyphal maturation and for septation. The chain is Serine/threonine-protein kinase CLA4 (CLA4) from Eremothecium gossypii (strain ATCC 10895 / CBS 109.51 / FGSC 9923 / NRRL Y-1056) (Yeast).